The primary structure comprises 477 residues: Glutamate--tRNA ligase (477 aa).

Residues proline 18–asparagine 28 carry the 'HIGH' region motif. A compositionally biased stretch (basic and acidic residues) spans proline 128–proline 138. Residues proline 128–proline 151 are disordered. A 'KMSKS' region motif is present at residues lysine 250–arginine 254. Lysine 253 lines the ATP pocket.

It belongs to the class-I aminoacyl-tRNA synthetase family. Glutamate--tRNA ligase type 1 subfamily. In terms of assembly, monomer.

It localises to the cytoplasm. It catalyses the reaction tRNA(Glu) + L-glutamate + ATP = L-glutamyl-tRNA(Glu) + AMP + diphosphate. Functionally, catalyzes the attachment of glutamate to tRNA(Glu) in a two-step reaction: glutamate is first activated by ATP to form Glu-AMP and then transferred to the acceptor end of tRNA(Glu). The sequence is that of Glutamate--tRNA ligase from Verminephrobacter eiseniae (strain EF01-2).